Reading from the N-terminus, the 284-residue chain is 4-diphosphocytidyl-2-C-methyl-D-erythritol kinase (284 aa).

The active site involves lysine 14. Residue 98–108 participates in ATP binding; it reads PMGGGLGGGSS. Aspartate 140 is an active-site residue.

It belongs to the GHMP kinase family. IspE subfamily.

The catalysed reaction is 4-CDP-2-C-methyl-D-erythritol + ATP = 4-CDP-2-C-methyl-D-erythritol 2-phosphate + ADP + H(+). It participates in isoprenoid biosynthesis; isopentenyl diphosphate biosynthesis via DXP pathway; isopentenyl diphosphate from 1-deoxy-D-xylulose 5-phosphate: step 3/6. Functionally, catalyzes the phosphorylation of the position 2 hydroxy group of 4-diphosphocytidyl-2C-methyl-D-erythritol. The polypeptide is 4-diphosphocytidyl-2-C-methyl-D-erythritol kinase (Shewanella baltica (strain OS155 / ATCC BAA-1091)).